The sequence spans 221 residues: Sperm acrosome membrane-associated protein 3 (221 aa).

At 1 to 69 (MGICMSMYTQ…EARSRAPRRQ (69 aa)) the chain is on the cytoplasmic side. The helical; Signal-anchor for type II membrane protein transmembrane segment at 70–90 (LCPPGITWLALAYLLSCLLAS) threads the bilayer. Residues 91–221 (SKAKVFSRCE…LSDWVDGCDF (131 aa)) lie on the Extracellular side of the membrane. The C-type lysozyme domain maps to 94–221 (KVFSRCELAK…LSDWVDGCDF (128 aa)). 4 cysteine pairs are disulfide-bonded: Cys-99–Cys-219, Cys-123–Cys-207, Cys-157–Cys-172, and Cys-168–Cys-186.

This sequence belongs to the glycosyl hydrolase 22 family. As to quaternary structure, interacts with ASTL. In terms of tissue distribution, the processed form is expressed in sperm (at protein level). Expressed strongly in testis and epididymis and weakly in pancreas.

It is found in the cytoplasmic vesicle. Its subcellular location is the secretory vesicle. The protein localises to the acrosome membrane. The protein resides in the secreted. Sperm surface membrane protein that may be involved in sperm-egg plasma membrane adhesion and fusion during fertilization. It could be a potential receptor for the egg oligosaccharide residue N-acetylglucosamine, which is present in the extracellular matrix over the egg plasma membrane. The processed form has no detectable bacteriolytic activity in vitro. The polypeptide is Sperm acrosome membrane-associated protein 3 (Spaca3) (Mus musculus (Mouse)).